A 166-amino-acid polypeptide reads, in one-letter code: Ribosome-binding factor A (166 aa).

The disordered stretch occupies residues 119–166 (VQAQAKSGVYAGDEDPYVKPRVIGEDEDEDDEDGDDIDRSAPGYEPAH). The span at 143–154 (EDEDEDDEDGDD) shows a compositional bias: acidic residues.

The protein belongs to the RbfA family. In terms of assembly, monomer. Binds 30S ribosomal subunits, but not 50S ribosomal subunits or 70S ribosomes.

Its subcellular location is the cytoplasm. In terms of biological role, one of several proteins that assist in the late maturation steps of the functional core of the 30S ribosomal subunit. Associates with free 30S ribosomal subunits (but not with 30S subunits that are part of 70S ribosomes or polysomes). Required for efficient processing of 16S rRNA. May interact with the 5'-terminal helix region of 16S rRNA. The polypeptide is Ribosome-binding factor A (Clavibacter michiganensis subsp. michiganensis (strain NCPPB 382)).